The chain runs to 378 residues: tRNA (guanine(26)-N(2))-dimethyltransferase (378 aa).

The Trm1 methyltransferase domain occupies 4–374 (KEVTEGKVRI…KGYEEIIRCV (371 aa)). Residues Arg44, Arg69, Asp87, Asp114, and Ala115 each contribute to the S-adenosyl-L-methionine site. Zn(2+)-binding residues include Cys246, Cys249, Cys263, and Cys266.

It belongs to the class I-like SAM-binding methyltransferase superfamily. Trm1 family.

The catalysed reaction is guanosine(26) in tRNA + 2 S-adenosyl-L-methionine = N(2)-dimethylguanosine(26) in tRNA + 2 S-adenosyl-L-homocysteine + 2 H(+). Dimethylates a single guanine residue at position 26 of a number of tRNAs using S-adenosyl-L-methionine as donor of the methyl groups. The protein is tRNA (guanine(26)-N(2))-dimethyltransferase of Saccharolobus islandicus (strain Y.G.57.14 / Yellowstone #1) (Sulfolobus islandicus).